The chain runs to 600 residues: NADH-quinone oxidoreductase subunit C/D (600 aa).

The tract at residues 1 to 190 (MVNNMTDLTA…DPFELTKAKQ (190 aa)) is NADH dehydrogenase I subunit C. The segment at 214–600 (DFMFLNLGPN…IDFVMSDVDR (387 aa)) is NADH dehydrogenase I subunit D.

This sequence in the N-terminal section; belongs to the complex I 30 kDa subunit family. The protein in the C-terminal section; belongs to the complex I 49 kDa subunit family. NDH-1 is composed of 13 different subunits. Subunits NuoB, CD, E, F, and G constitute the peripheral sector of the complex.

It is found in the cell inner membrane. It carries out the reaction a quinone + NADH + 5 H(+)(in) = a quinol + NAD(+) + 4 H(+)(out). Functionally, NDH-1 shuttles electrons from NADH, via FMN and iron-sulfur (Fe-S) centers, to quinones in the respiratory chain. The immediate electron acceptor for the enzyme in this species is believed to be ubiquinone. Couples the redox reaction to proton translocation (for every two electrons transferred, four hydrogen ions are translocated across the cytoplasmic membrane), and thus conserves the redox energy in a proton gradient. The chain is NADH-quinone oxidoreductase subunit C/D from Salmonella paratyphi C (strain RKS4594).